A 305-amino-acid chain; its full sequence is Glycine cleavage system transcriptional activator (305 aa).

Positions 6 to 63 constitute an HTH lysR-type domain; it reads PPLNALRVFDAAARHLSFTRAAEELFVTQAAVSHQIKSLEDFLGLKLFRRRNRSLLLT. The segment at residues 23–42 is a DNA-binding region (H-T-H motif); the sequence is FTRAAEELFVTQAAVSHQIK.

Belongs to the LysR transcriptional regulatory family.

It localises to the cytoplasm. In terms of biological role, regulatory protein for the glycine cleavage system operon (gcv). Mediates activation of gcv by glycine and repression by purines. GcvA is negatively autoregulated. Binds to three sites upstream of the gcv promoter. This chain is Glycine cleavage system transcriptional activator (gcvA), found in Escherichia coli O157:H7.